The following is a 46-amino-acid chain: Myoregulin (46 aa).

The Cytoplasmic portion of the chain corresponds to 1–21 (MSGKSWVLISTTSPQSLEDEI). A helical membrane pass occupies residues 22-42 (LGRLLKILFVLFVDLMSIMYV). The Lumenal portion of the chain corresponds to 43–46 (VITS).

Homooligomer. Monomer. Interacts with ATP2A1/SERCA1. Interacts as a monomer with ATP2A2/SERCA2; the interaction inhibits ATP2A2 activity. Specifically expressed in all skeletal muscles. Detected in both fast- and slow-type skeletal muscle. Not expressed in cardiac or smooth muscles.

It localises to the sarcoplasmic reticulum membrane. Its function is as follows. Inhibits the activity of ATP2A1/SERCA1 ATPase in sarcoplasmic reticulum by decreasing the apparent affinity of the ATPase for Ca(2+), thereby acting as a key regulator of skeletal muscle activity. Its high expression in adult skeletal muscle, suggests that it constitutes the predominant regulator of ATP2A1/SERCA1 in adult skeletal muscle. Also inhibits the activity of ATP2A2/SERCA2 and ATP2A3/SERCA3. This chain is Myoregulin, found in Mus musculus (Mouse).